The following is a 380-amino-acid chain: Alcohol dehydrogenase 2 (380 aa).

Residues cysteine 48, threonine 50, histidine 70, cysteine 100, cysteine 103, cysteine 106, cysteine 114, and cysteine 178 each contribute to the Zn(2+) site. Residues threonine 50 and histidine 70 each coordinate an alcohol. Threonine 50 is a binding site for NAD(+). NAD(+)-binding positions include glycine 203 to glycine 208, aspartate 227, arginine 232, threonine 273, valine 296, valine 296 to valine 298, phenylalanine 323, and arginine 373.

This sequence belongs to the zinc-containing alcohol dehydrogenase family. As to quaternary structure, homodimer. Homotetramer. It depends on Zn(2+) as a cofactor.

The protein resides in the cytoplasm. It carries out the reaction a primary alcohol + NAD(+) = an aldehyde + NADH + H(+). It catalyses the reaction a secondary alcohol + NAD(+) = a ketone + NADH + H(+). The protein is Alcohol dehydrogenase 2 (ADH2) of Solanum tuberosum (Potato).